A 346-amino-acid polypeptide reads, in one-letter code: Phosphoribosylformylglycinamidine cyclo-ligase (346 aa).

Belongs to the AIR synthase family.

The protein resides in the cytoplasm. It carries out the reaction 2-formamido-N(1)-(5-O-phospho-beta-D-ribosyl)acetamidine + ATP = 5-amino-1-(5-phospho-beta-D-ribosyl)imidazole + ADP + phosphate + H(+). The protein operates within purine metabolism; IMP biosynthesis via de novo pathway; 5-amino-1-(5-phospho-D-ribosyl)imidazole from N(2)-formyl-N(1)-(5-phospho-D-ribosyl)glycinamide: step 2/2. This chain is Phosphoribosylformylglycinamidine cyclo-ligase, found in Vibrio atlanticus (strain LGP32) (Vibrio splendidus (strain Mel32)).